Reading from the N-terminus, the 512-residue chain is Activin receptor type-2B (512 aa).

A signal peptide spans 1 to 18 (MTAPWVALALLWGSLCAG). At 19 to 137 (SGRGEAETRE…PPPTAPTLLT (119 aa)) the chain is on the extracellular side. 5 disulfide bridges follow: C29–C59, C49–C77, C84–C103, C90–C102, and C104–C109. N-linked (GlcNAc...) asparagine glycans are attached at residues N42 and N65. Residues 138-158 (VLAYSLLPIGGLSLIVLLAFW) traverse the membrane as a helical segment. The Cytoplasmic portion of the chain corresponds to 159-512 (MYRHRKPPYG…VDLPPKESSI (354 aa)). The region spanning 190–480 (LQLLEIKARG…AGCVEERVSL (291 aa)) is the Protein kinase domain. ATP is bound by residues 196–204 (KARGRFGCV) and K217. The Proton acceptor role is filled by D321. An interaction with DYNLT1 region spans residues 491 to 512 (DCLVSLVTSVTNVDLPPKESSI).

This sequence belongs to the protein kinase superfamily. TKL Ser/Thr protein kinase family. TGFB receptor subfamily. In terms of assembly, forms an activin receptor complex with activin type II receptors such as ACVR1B. Interacts with VPS39. Interacts with DYNLT1. Interacts with BMP3. Interacts with BMP2. Interacts with BMP6. The cofactor is Mg(2+). Requires Mn(2+) as cofactor. Phosphorylated. Constitutive phosphorylation is in part catalyzed by its own kinase activity.

It localises to the cell membrane. It carries out the reaction L-threonyl-[receptor-protein] + ATP = O-phospho-L-threonyl-[receptor-protein] + ADP + H(+). The catalysed reaction is L-seryl-[receptor-protein] + ATP = O-phospho-L-seryl-[receptor-protein] + ADP + H(+). Its function is as follows. Transmembrane serine/threonine kinase activin type-2 receptor forming an activin receptor complex with activin type-1 serine/threonine kinase receptors (ACVR1, ACVR1B or ACVR1c). Transduces the activin signal from the cell surface to the cytoplasm and is thus regulating many physiological and pathological processes including neuronal differentiation and neuronal survival, hair follicle development and cycling, FSH production by the pituitary gland, wound healing, extracellular matrix production, immunosuppression and carcinogenesis. Activin is also thought to have a paracrine or autocrine role in follicular development in the ovary. Within the receptor complex, the type-2 receptors act as a primary activin receptors (binds activin-A/INHBA, activin-B/INHBB as well as inhibin-A/INHA-INHBA). The type-1 receptors like ACVR1B act as downstream transducers of activin signals. Activin binds to type-2 receptor at the plasma membrane and activates its serine-threonine kinase. The activated receptor type-2 then phosphorylates and activates the type-1 receptor. Once activated, the type-1 receptor binds and phosphorylates the SMAD proteins SMAD2 and SMAD3, on serine residues of the C-terminal tail. Soon after their association with the activin receptor and subsequent phosphorylation, SMAD2 and SMAD3 are released into the cytoplasm where they interact with the common partner SMAD4. This SMAD complex translocates into the nucleus where it mediates activin-induced transcription. Inhibitory SMAD7, which is recruited to ACVR1B through FKBP1A, can prevent the association of SMAD2 and SMAD3 with the activin receptor complex, thereby blocking the activin signal. Activin signal transduction is also antagonized by the binding to the receptor of inhibin-B via the IGSF1 inhibin coreceptor. The polypeptide is Activin receptor type-2B (ACVR2B) (Homo sapiens (Human)).